The primary structure comprises 686 residues: Chromatin modification-related protein EAF1 (686 aa).

The segment at 71–97 is disordered; sequence QMKRRQNDHHNQGPPPKVQKSTVDSLK. Residues 202 to 280 enclose the HSA domain; it reads FKFIRKSKKK…DKSIIRNLPV (79 aa). Residues 354 to 418 enclose the Myb-like domain; it reads IPTIWLPEDD…FERYIQLNDK (65 aa). Disordered stretches follow at residues 493 to 517, 544 to 617, and 657 to 686; these read RKST…RIPT, ARMV…QQRR, and QQGY…PNNA. Over residues 497 to 506 the composition is skewed to polar residues; sequence AELQANQNVT. The span at 554-568 shows a compositional bias: pro residues; sequence APAPAPAPPPPPPPK. Residues 574-588 are compositionally biased toward polar residues; sequence TTPNGTPLTNEQIQH. Residues 599–613 show a composition bias toward low complexity; it reads LQQQQQQQQQQQHQQ. Over residues 671 to 686 the composition is skewed to polar residues; that stretch reads QKNQTASPMSGSPNNA.

It belongs to the EAF1 family. In terms of assembly, component of the NuA4 histone acetyltransferase complex.

Its subcellular location is the nucleus. In terms of biological role, component of the NuA4 histone acetyltransferase complex which is involved in transcriptional activation of selected genes principally by acetylation of nucleosomal histone H4 and H2A. The NuA4 complex is also involved in DNA repair. The polypeptide is Chromatin modification-related protein EAF1 (VID21) (Candida albicans (strain SC5314 / ATCC MYA-2876) (Yeast)).